The following is a 317-amino-acid chain: DNA-directed RNA polymerase subunit alpha (317 aa).

Positions M1–F229 are alpha N-terminal domain (alpha-NTD). The interval A245–R317 is alpha C-terminal domain (alpha-CTD).

It belongs to the RNA polymerase alpha chain family. In terms of assembly, homodimer. The RNAP catalytic core consists of 2 alpha, 1 beta, 1 beta' and 1 omega subunit. When a sigma factor is associated with the core the holoenzyme is formed, which can initiate transcription.

It catalyses the reaction RNA(n) + a ribonucleoside 5'-triphosphate = RNA(n+1) + diphosphate. Functionally, DNA-dependent RNA polymerase catalyzes the transcription of DNA into RNA using the four ribonucleoside triphosphates as substrates. The sequence is that of DNA-directed RNA polymerase subunit alpha from Aquifex aeolicus (strain VF5).